A 128-amino-acid polypeptide reads, in one-letter code: Protein BEX2 (128 aa).

The disordered stretch occupies residues 1–44; that stretch reads MMPKEEQVLKNLTMENANEENEKKDEKEQDANKGEPLALSLGAG. Over residues 20-33 the composition is skewed to basic and acidic residues; that stretch reads ENEKKDEKEQDANK. At R50 the chain carries Omega-N-methylarginine. The disordered stretch occupies residues 103–128; that stretch reads QLSHSLRAVSTDPPHHEHNDEFCLMP. The span at 115-128 shows a compositional bias: basic and acidic residues; it reads PPHHEHNDEFCLMP. The his cluster stretch occupies residues 117–121; it reads HHEHN. Position 125 (C125) interacts with Zn(2+).

It belongs to the BEX family. Interacts with LMO2, possibly leading to regulate the transcriptional activity of a DNA-binding complex containing LMO2. Interacts with OMP.

It localises to the cytoplasm. Its subcellular location is the nucleus. Functionally, regulator of mitochondrial apoptosis and G1 cell cycle. Regulates the level of PP2A regulatory subunit B and PP2A phosphatase activity. In absence of reductive stress, acts as a pseudosubstrate for the CRL2(FEM1B) complex: associates with FEM1B via zinc, thereby preventing association between FEM1B and its substrates. In Bos taurus (Bovine), this protein is Protein BEX2 (BEX2).